A 249-amino-acid chain; its full sequence is tRNA pseudouridine synthase A (249 aa).

Asp-53 functions as the Nucleophile in the catalytic mechanism. Position 111 (Tyr-111) interacts with substrate.

It belongs to the tRNA pseudouridine synthase TruA family. In terms of assembly, homodimer.

The enzyme catalyses uridine(38/39/40) in tRNA = pseudouridine(38/39/40) in tRNA. Formation of pseudouridine at positions 38, 39 and 40 in the anticodon stem and loop of transfer RNAs. The chain is tRNA pseudouridine synthase A from Streptococcus pyogenes serotype M1.